The primary structure comprises 635 residues: Threonine--tRNA ligase (635 aa).

The 61-residue stretch at 1–61 folds into the TGS domain; it reads MIQITLPDSS…SQDSALSIVT (61 aa). Positions 242–533 are catalytic; that stretch reads DHRKLGKELD…LIEEHAGALP (292 aa). 3 residues coordinate Zn(2+): cysteine 333, histidine 384, and histidine 510.

Belongs to the class-II aminoacyl-tRNA synthetase family. As to quaternary structure, homodimer. Zn(2+) serves as cofactor.

It localises to the cytoplasm. It carries out the reaction tRNA(Thr) + L-threonine + ATP = L-threonyl-tRNA(Thr) + AMP + diphosphate + H(+). Catalyzes the attachment of threonine to tRNA(Thr) in a two-step reaction: L-threonine is first activated by ATP to form Thr-AMP and then transferred to the acceptor end of tRNA(Thr). Also edits incorrectly charged L-seryl-tRNA(Thr). The polypeptide is Threonine--tRNA ligase (Polaromonas naphthalenivorans (strain CJ2)).